The chain runs to 243 residues: Protein IN2-1 homolog A (243 aa).

Residues 31 to 112 (GTTRLYICYF…YIDSHFEGPA (82 aa)) form the GST N-terminal domain. Glutathione-binding positions include K70, V84, and 96–97 (ES). Positions 117–240 (DPEKRQFADE…YLLDLAKTHL (124 aa)) constitute a GST C-terminal domain.

The protein belongs to the GST superfamily. HSP26 family.

This Oryza sativa subsp. japonica (Rice) protein is Protein IN2-1 homolog A.